The sequence spans 483 residues: NADH-quinone oxidoreductase subunit N (483 aa).

13 consecutive transmembrane segments (helical) span residues 9–29 (LVLP…WGAF), 35–55 (PLFT…AVVG), 69–89 (AAAT…IVLG), 104–124 (AVLV…GDLI), 158–178 (FVLG…IYGF), 201–221 (VGLL…VSAA), 234–254 (APTS…MMMF), 272–292 (VLII…LAQT), 297–317 (LWAY…ATGG), 325–345 (LLFM…LQAL), 368–388 (IAVA…FSGF), 404–424 (VLLQ…AFYY), and 449–469 (AVGF…LIWL).

This sequence belongs to the complex I subunit 2 family. NDH-1 is composed of 14 different subunits. Subunits NuoA, H, J, K, L, M, N constitute the membrane sector of the complex.

The protein resides in the cell inner membrane. The catalysed reaction is a quinone + NADH + 5 H(+)(in) = a quinol + NAD(+) + 4 H(+)(out). In terms of biological role, NDH-1 shuttles electrons from NADH, via FMN and iron-sulfur (Fe-S) centers, to quinones in the respiratory chain. The immediate electron acceptor for the enzyme in this species is believed to be ubiquinone. Couples the redox reaction to proton translocation (for every two electrons transferred, four hydrogen ions are translocated across the cytoplasmic membrane), and thus conserves the redox energy in a proton gradient. This Caulobacter sp. (strain K31) protein is NADH-quinone oxidoreductase subunit N.